The sequence spans 355 residues: MFTLSDFDFNLPPELIAQTALPERTASRLLEVDHTVEPARLVDRNFVELPSCIAPGDLLVFNDTRVLKARFFGQKASGGKIEVLIERVTGTHTALAQIRASKSPGTGTTLRLADAFDVTVGERVEPFFTLHFPQPCLTLIEQHGRLPLPPYIEHDADANDETRYQTVYASNPGAVAAPTAGLHFDLPLLEQLDAMGVERATLTLHVGAGTFQPVRVENIAEHRMHSEWYDLPQSLVDKIAATRARGGNVIAVGTTSMRALEAAARSADEAGRPLAATQAETDIFITPGYRFRVVDRLVTNFHLPKSTLLMLVSAFAGVETIRAAYRHAIDERYRFFSYGDAMLLTRRDTPEAPQA.

Belongs to the QueA family. As to quaternary structure, monomer.

The protein localises to the cytoplasm. The enzyme catalyses 7-aminomethyl-7-carbaguanosine(34) in tRNA + S-adenosyl-L-methionine = epoxyqueuosine(34) in tRNA + adenine + L-methionine + 2 H(+). It participates in tRNA modification; tRNA-queuosine biosynthesis. Transfers and isomerizes the ribose moiety from AdoMet to the 7-aminomethyl group of 7-deazaguanine (preQ1-tRNA) to give epoxyqueuosine (oQ-tRNA). This Burkholderia ambifaria (strain ATCC BAA-244 / DSM 16087 / CCUG 44356 / LMG 19182 / AMMD) (Burkholderia cepacia (strain AMMD)) protein is S-adenosylmethionine:tRNA ribosyltransferase-isomerase.